A 465-amino-acid polypeptide reads, in one-letter code: Fujikurins efflux protein FFUJ_12242 (465 aa).

Residues 1–66 (MATNVGGAVD…AAKAHDEGPP (66 aa)) form a disordered region. Over residues 11–28 (NSRRSISDNRHDPEKPAE) the composition is skewed to basic and acidic residues. The next 7 membrane-spanning stretches (helical) occupy residues 70-90 (TAAW…PGWI), 115-135 (WIPS…GIIF), 142-162 (PLII…SLAK), 175-195 (SAIG…TWFL), 200-220 (AAMG…PIMI), 231-251 (WALR…CLTV), and 274-294 (PAFA…YIPI). N-linked (GlcNAc...) asparagine glycosylation occurs at N310. Transmembrane regions (helical) follow at residues 314–334 (YLVA…GYGA), 342–362 (MFII…IPAT), 368–388 (IGYA…VGAL), 404–424 (IVFL…GAIL), and 430–450 (GWVS…AIIL).

The protein belongs to the major facilitator superfamily. Monocarboxylate porter (TC 2.A.1.13) family.

The protein resides in the cell membrane. Efflux pump that may be involved in the secretion of fujikurins. The chain is Fujikurins efflux protein FFUJ_12242 from Gibberella fujikuroi (strain CBS 195.34 / IMI 58289 / NRRL A-6831) (Bakanae and foot rot disease fungus).